Reading from the N-terminus, the 483-residue chain is UDP-N-acetylmuramoyl-L-alanyl-D-glutamate--2,6-diaminopimelate ligase (483 aa).

Ser-29 provides a ligand contact to UDP-N-acetyl-alpha-D-muramoyl-L-alanyl-D-glutamate. 107 to 113 (GTSGKTS) contacts ATP. UDP-N-acetyl-alpha-D-muramoyl-L-alanyl-D-glutamate-binding positions include 149-150 (TT), Ser-176, Gln-182, and Arg-184. N6-carboxylysine is present on Lys-216. Meso-2,6-diaminopimelate contacts are provided by residues Arg-380, 404–407 (DNPR), Gly-452, and Glu-456. The short motif at 404–407 (DNPR) is the Meso-diaminopimelate recognition motif element.

This sequence belongs to the MurCDEF family. MurE subfamily. Mg(2+) is required as a cofactor. Post-translationally, carboxylation is probably crucial for Mg(2+) binding and, consequently, for the gamma-phosphate positioning of ATP.

It localises to the cytoplasm. It carries out the reaction UDP-N-acetyl-alpha-D-muramoyl-L-alanyl-D-glutamate + meso-2,6-diaminopimelate + ATP = UDP-N-acetyl-alpha-D-muramoyl-L-alanyl-gamma-D-glutamyl-meso-2,6-diaminopimelate + ADP + phosphate + H(+). It participates in cell wall biogenesis; peptidoglycan biosynthesis. Its function is as follows. Catalyzes the addition of meso-diaminopimelic acid to the nucleotide precursor UDP-N-acetylmuramoyl-L-alanyl-D-glutamate (UMAG) in the biosynthesis of bacterial cell-wall peptidoglycan. This Chelativorans sp. (strain BNC1) protein is UDP-N-acetylmuramoyl-L-alanyl-D-glutamate--2,6-diaminopimelate ligase.